The following is a 500-amino-acid chain: 4-aminobutyrate aminotransferase, mitochondrial (500 aa).

Residues 1-28 (MASMLVAQRLACSFQHSYRLLVPGSRHI) constitute a mitochondrion transit peptide. A [2Fe-2S] cluster-binding site is contributed by Cys163. 164 to 165 (GS) contributes to the pyridoxal 5'-phosphate binding site. Position 166 (Cys166) interacts with [2Fe-2S] cluster. Arg220 contributes to the substrate binding site. Lys231 is modified (N6-succinyllysine). Lys252 carries the post-translational modification N6-acetyllysine; alternate. Lys252 is modified (N6-succinyllysine; alternate). Lys279 and Lys318 each carry N6-acetyllysine. An N6-(pyridoxal phosphate)lysine modification is found at Lys357. Residue Thr381 coordinates pyridoxal 5'-phosphate. Lys413 carries the N6-acetyllysine; alternate modification. Position 413 is an N6-succinyllysine; alternate (Lys413). N6-acetyllysine is present on residues Lys452 and Lys470.

Belongs to the class-III pyridoxal-phosphate-dependent aminotransferase family. As to quaternary structure, homodimer; disulfide-linked. It depends on pyridoxal 5'-phosphate as a cofactor. Requires [2Fe-2S] cluster as cofactor.

It is found in the mitochondrion matrix. It catalyses the reaction 4-aminobutanoate + 2-oxoglutarate = succinate semialdehyde + L-glutamate. The catalysed reaction is (S)-3-amino-2-methylpropanoate + 2-oxoglutarate = 2-methyl-3-oxopropanoate + L-glutamate. In terms of biological role, catalyzes the conversion of gamma-aminobutyrate and L-beta-aminoisobutyrate to succinate semialdehyde and methylmalonate semialdehyde, respectively. Can also convert delta-aminovalerate and beta-alanine. This Bos taurus (Bovine) protein is 4-aminobutyrate aminotransferase, mitochondrial (ABAT).